Consider the following 124-residue polypeptide: Glycine cleavage system H protein (124 aa).

The Lipoyl-binding domain occupies 22-104 (TATVGITDFA…YGDGWMIEIE (83 aa)). N6-lipoyllysine is present on Lys-63.

It belongs to the GcvH family. The glycine cleavage system is composed of four proteins: P, T, L and H. Requires (R)-lipoate as cofactor.

The glycine cleavage system catalyzes the degradation of glycine. The H protein shuttles the methylamine group of glycine from the P protein to the T protein. The sequence is that of Glycine cleavage system H protein from Salinibacter ruber (strain DSM 13855 / M31).